A 606-amino-acid polypeptide reads, in one-letter code: R-linalool synthase, chloroplastic (606 aa).

The transit peptide at 1 to 51 directs the protein to the chloroplast; it reads MCTIISVNHHHVAILSKPKVKLFHTKNKRSASINLPWSLSPSSSAASRPIS. (2E)-geranyl diphosphate is bound by residues arginine 326, aspartate 363, aspartate 367, arginine 504, and aspartate 507. Positions 363 and 367 each coordinate Mg(2+). A DDXXD motif motif is present at residues 363–367; it reads DDVYD. Mg(2+)-binding residues include aspartate 507, threonine 511, and glutamate 515.

It belongs to the terpene synthase family. Tpsb subfamily. Mg(2+) serves as cofactor. Mn(2+) is required as a cofactor.

The protein resides in the plastid. It localises to the chloroplast. It catalyses the reaction (2E)-geranyl diphosphate + H2O = (R)-linalool + diphosphate. It participates in secondary metabolite biosynthesis; terpenoid biosynthesis. Functionally, monoterpene synthase that catalyzes the formation of (3R)-linalool from geranyl diphosphate, but not from farnesyl diphosphate or geranylgeranyl diphosphate. The polypeptide is R-linalool synthase, chloroplastic (Mentha aquatica (Water mint)).